We begin with the raw amino-acid sequence, 133 residues long: Small ribosomal subunit protein uS9 (133 aa).

The protein belongs to the universal ribosomal protein uS9 family.

This is Small ribosomal subunit protein uS9 from Picrophilus torridus (strain ATCC 700027 / DSM 9790 / JCM 10055 / NBRC 100828 / KAW 2/3).